The following is a 315-amino-acid chain: Microtubule-associated protein Jupiter (315 aa).

Positions 1 to 14 are enriched in polar residues; it reads MISNFDCTDNQASS. 2 disordered regions span residues 1 to 37 and 51 to 89; these read MISNFDCTDNQASSKVLRPPGGGSSDIFGSEMPQTPR and EKDNGVKNNGDAPRRGQKTVDSHSRLFGEPTRPITPGKN. At Ser24 the chain carries Phosphoserine. Thr35 carries the phosphothreonine modification. A compositionally biased stretch (basic and acidic residues) spans 62 to 76; that stretch reads APRRGQKTVDSHSRL. Phosphothreonine is present on residues Thr81 and Thr85. Phosphoserine is present on residues Ser94, Ser122, and Ser133. Disordered stretches follow at residues 116 to 166 and 272 to 315; these read YNGK…ADDA and EGNP…SGLW. Residues 120 to 133 are compositionally biased toward low complexity; sequence SGSVSSASSSVSSS. 2 stretches are compositionally biased toward polar residues: residues 134-148 and 285-296; these read TENLKMNSGSRSVFR and DFTQRQESSNGG.

This sequence belongs to the MAP Jupiter family.

The protein resides in the nucleus. It is found in the cytoplasm. Its subcellular location is the cytoskeleton. It localises to the spindle. Binds to all microtubule populations. The sequence is that of Microtubule-associated protein Jupiter from Drosophila sechellia (Fruit fly).